The primary structure comprises 196 residues: MSRYRGPRLKKIRRLGALPGLTRKTPKSGSNLKKKFHSGKKEQYRIRLQEKQKLRFHYGLTERQLLRYVHIAGKAKRSTGQVLLQLLEMRLDNILFRLGMASTIPGARQLVNHRHILVNGRIVNIPSFRCKPRDIITTKDNQRSKGLVQNFIASSDPGKLPKHLTIDTLEYKGLVNKILDRKWVGLKINELLVVEY.

Positions 16–36 (GALPGLTRKTPKSGSNLKKKF) are disordered. One can recognise an S4 RNA-binding domain in the interval 89 to 169 (MRLDNILFRL…LPKHLTIDTL (81 aa)).

Belongs to the universal ribosomal protein uS4 family. In terms of assembly, part of the 30S ribosomal subunit. Contacts protein S5. The interaction surface between S4 and S5 is involved in control of translational fidelity.

The protein localises to the plastid. Its subcellular location is the chloroplast. In terms of biological role, one of the primary rRNA binding proteins, it binds directly to 16S rRNA where it nucleates assembly of the body of the 30S subunit. Functionally, with S5 and S12 plays an important role in translational accuracy. The sequence is that of Small ribosomal subunit protein uS4c (rps4) from Cinna latifolia (Drooping woodreed).